Consider the following 1221-residue polypeptide: Phosphoenolpyruvate carboxylase 2 (1221 aa).

Histidine 156 is a catalytic residue. 2 disordered regions span residues 443 to 588 (TAAE…DPTF) and 642 to 661 (REPA…GGGG). Low complexity-rich tracts occupy residues 503-513 (TTTATAAAAAA) and 550-564 (PFRE…TAAS). 2 stretches are compositionally biased toward gly residues: residues 565–575 (GGAGGGGGGGA) and 648–661 (AHGG…GGGG). Residue lysine 886 is part of the active site.

Belongs to the PEPCase type 1 family. Mg(2+) serves as cofactor.

The protein localises to the cytoplasm. The catalysed reaction is oxaloacetate + phosphate = phosphoenolpyruvate + hydrogencarbonate. Its function is as follows. Through the carboxylation of phosphoenolpyruvate (PEP) it forms oxaloacetate, a four-carbon dicarboxylic acid source for the tricarboxylic acid cycle. The sequence is that of Phosphoenolpyruvate carboxylase 2 from Chlamydomonas reinhardtii (Chlamydomonas smithii).